The chain runs to 336 residues: N-acetylornithine carbamoyltransferase (336 aa).

Residues Ser-49 to Thr-52, Trp-77, and Arg-112 each bind carbamoyl phosphate. N(2)-acetyl-L-ornithine is bound at residue Glu-144. Residue His-148–Gln-151 coordinates carbamoyl phosphate. N(2)-acetyl-L-ornithine-binding residues include Lys-252 and Leu-295. Residue Cys-294–Leu-295 coordinates carbamoyl phosphate. At Lys-302 the chain carries N6-carboxylysine. Arg-322 provides a ligand contact to carbamoyl phosphate.

This sequence belongs to the aspartate/ornithine carbamoyltransferase superfamily. AOTCase family. In terms of assembly, homotrimer.

The protein localises to the cytoplasm. It catalyses the reaction N(2)-acetyl-L-ornithine + carbamoyl phosphate = N(2)-acetyl-L-citrulline + phosphate + H(+). It participates in amino-acid biosynthesis; L-arginine biosynthesis. Carboxylation at Lys-302 increases the catalytic activity of the enzyme. Catalyzes the transfer of the carbamoyl group from carbamoyl phosphate to the delta-amino group of N(2)-acetyl-L-ornithine to produce N(2)-acetyl-L-citrulline. This is a step in an alternative arginine biosynthesis pathway. The enzyme has no activity with ornithine. The chain is N-acetylornithine carbamoyltransferase from Xylella fastidiosa (strain Temecula1 / ATCC 700964).